Reading from the N-terminus, the 208-residue chain is Small ribosomal subunit protein uS4 (208 aa).

The region spanning 99-165 is the S4 RNA-binding domain; sequence RRLDNVVFQL…PRLKEILSSL (67 aa).

This sequence belongs to the universal ribosomal protein uS4 family. Part of the 30S ribosomal subunit. Contacts protein S5. The interaction surface between S4 and S5 is involved in control of translational fidelity.

In terms of biological role, one of the primary rRNA binding proteins, it binds directly to 16S rRNA where it nucleates assembly of the body of the 30S subunit. With S5 and S12 plays an important role in translational accuracy. The polypeptide is Small ribosomal subunit protein uS4 (Desulfitobacterium hafniense (strain DSM 10664 / DCB-2)).